A 112-amino-acid polypeptide reads, in one-letter code: S-adenosylmethionine decarboxylase proenzyme (112 aa).

Serine 62 functions as the Schiff-base intermediate with substrate; via pyruvic acid in the catalytic mechanism. At serine 62 the chain carries Pyruvic acid (Ser); by autocatalysis. Catalysis depends on histidine 67, which acts as the Proton acceptor; for processing activity. The active-site Proton donor; for catalytic activity is cysteine 82.

This sequence belongs to the prokaryotic AdoMetDC family. Type 1 subfamily. Heterotetramer of two alpha and two beta chains arranged as a dimer of alpha/beta heterodimers. Pyruvate is required as a cofactor. Post-translationally, is synthesized initially as an inactive proenzyme. Formation of the active enzyme involves a self-maturation process in which the active site pyruvoyl group is generated from an internal serine residue via an autocatalytic post-translational modification. Two non-identical subunits are generated from the proenzyme in this reaction, and the pyruvate is formed at the N-terminus of the alpha chain, which is derived from the carboxyl end of the proenzyme. The post-translation cleavage follows an unusual pathway, termed non-hydrolytic serinolysis, in which the side chain hydroxyl group of the serine supplies its oxygen atom to form the C-terminus of the beta chain, while the remainder of the serine residue undergoes an oxidative deamination to produce ammonia and the pyruvoyl group blocking the N-terminus of the alpha chain.

It carries out the reaction S-adenosyl-L-methionine + H(+) = S-adenosyl 3-(methylsulfanyl)propylamine + CO2. The protein operates within amine and polyamine biosynthesis; S-adenosylmethioninamine biosynthesis; S-adenosylmethioninamine from S-adenosyl-L-methionine: step 1/1. Its function is as follows. Catalyzes the decarboxylation of S-adenosylmethionine to S-adenosylmethioninamine (dcAdoMet), the propylamine donor required for the synthesis of the polyamines spermine and spermidine from the diamine putrescine. This chain is S-adenosylmethionine decarboxylase proenzyme, found in Archaeoglobus fulgidus (strain ATCC 49558 / DSM 4304 / JCM 9628 / NBRC 100126 / VC-16).